The chain runs to 85 residues: uncharacterized protein (85 aa).

Helical transmembrane passes span 4-24, 27-47, and 61-81; these read LTLCWLALLALAVTGVLLGGA, SPWLLAAVLACAVAKGWLIGE, and RLLLAWPLLMALAVGAALYLA.

Its subcellular location is the cell membrane. This is an uncharacterized protein from Pseudomonas aeruginosa (strain ATCC 15692 / DSM 22644 / CIP 104116 / JCM 14847 / LMG 12228 / 1C / PRS 101 / PAO1).